The sequence spans 256 residues: Thiazole synthase (256 aa).

The Schiff-base intermediate with DXP role is filled by lysine 98. Residues glycine 159, 185–186 (AG), and 207–208 (NT) contribute to the 1-deoxy-D-xylulose 5-phosphate site.

The protein belongs to the ThiG family. In terms of assembly, homotetramer. Forms heterodimers with either ThiH or ThiS.

It is found in the cytoplasm. It catalyses the reaction [ThiS sulfur-carrier protein]-C-terminal-Gly-aminoethanethioate + 2-iminoacetate + 1-deoxy-D-xylulose 5-phosphate = [ThiS sulfur-carrier protein]-C-terminal Gly-Gly + 2-[(2R,5Z)-2-carboxy-4-methylthiazol-5(2H)-ylidene]ethyl phosphate + 2 H2O + H(+). It functions in the pathway cofactor biosynthesis; thiamine diphosphate biosynthesis. Functionally, catalyzes the rearrangement of 1-deoxy-D-xylulose 5-phosphate (DXP) to produce the thiazole phosphate moiety of thiamine. Sulfur is provided by the thiocarboxylate moiety of the carrier protein ThiS. In vitro, sulfur can be provided by H(2)S. In Aliivibrio salmonicida (strain LFI1238) (Vibrio salmonicida (strain LFI1238)), this protein is Thiazole synthase.